A 905-amino-acid chain; its full sequence is MFKGIRKRASNLSIYAVTSNLSATNAPSDQQPASNSPSSYESILSQVHDFEIALKAMDYLLDDRTQQGTELLHEQAQLGSSDGKPHAIFPLALGVMEFIEATLGFEPEVMARAHKTLNDAESASTTNAKYNVRHQLATSNIYPPGTEFQVTLAESTLLNALLMLLTENNGMVESVKALYKLRKAYQTLDAVYKKIKELEPVFNRNLAKLRKAANKGLLEVPRLNGLVNGGTRLKHSISTVDLPGYESLGSSSSSSSATLPEDLKLMKNLEKIYLMRKARIEGTNLGNNTGVQHQPLNLFSDLASSIAMKQNGNGVETSLPIIPQYGKFNNGNEEQVEEQEEEGEGEEEEEENSDNEHFVDAVEELTIGDINSSSLADSSAQSILSSVETSPSEVQSTDMHLHVSTTDEFIHSGVQLCFGILQVVLSLIPPAIGKVLSIVGFKGERETGLKLLWKTAITSRNVHGELALLFLLMFYDGPVQFVDTGFRLPSANKLKNIINLENKTSVTDDEVELIKDSPESYTSQLLKRARHHFPHNALWILQEGRMLAAEGRLAQASTLMQNFTDNPNNKIQMQQIEALLIFDRATIYIYMHEYDKAARDLIYLIEINSWSKAVYLFMAAACYLERYRMVRMGLQSPQINADTKLSLNGDVELEAKKYSDLFTKYLNLSLSYVPGHGANAQKKGGLGGSGKQMPFDKFLLRKWKHIEQRKKRHPELSLADVVGTSLIHELIYFWNGYNRMSPQDFELALKLLGYSGAPNTELSANTLHNNYAKIEETEDEAMIRYFLQSVALRQLGKVKQGLGILDSHVISKYVISEVPQFRFHKMTYSPYLYPTAFYEKTMFVWLLRTSESTIKQDVGRAVHECKSYLKKAETVGEGDYELSNRTSMRIKAAGDRLDQLGSLSR.

The interval 325–356 (YGKFNNGNEEQVEEQEEEGEGEEEEEENSDNE) is disordered. The span at 334 to 353 (EQVEEQEEEGEGEEEEEENS) shows a compositional bias: acidic residues.

Belongs to the IML2 family. Interacts with lipid droplet proteins.

It is found in the cytoplasm. Its subcellular location is the nucleus. Its function is as follows. Inclusion body (IB) resident protein that interacts strongly with lipid droplet (LD) proteins. Involved in LD-mediated IB clearing after protein folding stress, probably by enabling access to the IBs of an LD-stored soluble sterol derivative that acts as a chaperone in inclusion clearing. The polypeptide is Inclusion body clearance protein IML2 (IML2) (Lodderomyces elongisporus (strain ATCC 11503 / CBS 2605 / JCM 1781 / NBRC 1676 / NRRL YB-4239) (Yeast)).